We begin with the raw amino-acid sequence, 214 residues long: Probable GTP-binding protein EngB (214 aa).

An EngB-type G domain is found at 25–203 (EGAEVAFAGR…EQVITGWLNL (179 aa)). Residues 33–40 (GRSNAGKS), 60–64 (GRTQL), 80–83 (DLPG), 147–150 (TKSD), and 182–184 (FSS) contribute to the GTP site. 2 residues coordinate Mg(2+): serine 40 and threonine 62.

The protein belongs to the TRAFAC class TrmE-Era-EngA-EngB-Septin-like GTPase superfamily. EngB GTPase family. It depends on Mg(2+) as a cofactor.

Functionally, necessary for normal cell division and for the maintenance of normal septation. The protein is Probable GTP-binding protein EngB of Teredinibacter turnerae (strain ATCC 39867 / T7901).